The following is a 514-amino-acid chain: Cytidine and dCMP deaminase domain-containing protein 1 (514 aa).

Composition is skewed to polar residues over residues 1 to 11 and 18 to 27; these read MKEAGQMQNLE and SVSTQTGSMT. Disordered regions lie at residues 1-27 and 55-83; these read MKEA…GSMT and RQKS…TDKR. Basic and acidic residues predominate over residues 59–83; the sequence is QKNEEGKHGPLGDNEERTRVSTDKR. A CMP/dCMP-type deaminase 1 domain is found at 70 to 168; that stretch reads GDNEERTRVS…SLLTEASSSE (99 aa). Zn(2+) is bound by residues H109, C134, and C137. A Nuclear export signal motif is present at residues 271–283; sequence NLRQNMKDLILLL. One can recognise a CMP/dCMP-type deaminase 2 domain in the interval 317 to 482; the sequence is EIARHCMVQA…LNPSGAYGLE (166 aa). H398 is a Zn(2+) binding site. E400 functions as the Proton donor in the catalytic mechanism. Residues C426 and C429 each contribute to the Zn(2+) site. Positions 480–514 are disordered; sequence GLEQNEPERRENGVLRPVPQKEEQHQDKKLRLGIH. Residues 485 to 514 are compositionally biased toward basic and acidic residues; that stretch reads EPERRENGVLRPVPQKEEQHQDKKLRLGIH. A Bipartite nuclear localization signal motif is present at residues 488-510; that stretch reads RRENGVLRPVPQKEEQHQDKKLR.

Belongs to the cytidine and deoxycytidylate deaminase family. The cofactor is Zn(2+). Widely expressed. Expressed at high levels in the testis.

It localises to the cytoplasm. The protein resides in the nucleus. The catalysed reaction is 2'-deoxycytidine + H2O + H(+) = 2'-deoxyuridine + NH4(+). It catalyses the reaction cytidine + H2O + H(+) = uridine + NH4(+). In terms of biological role, catalyzes the deamination of cytidine and deoxycytidine into uridine and deoxyuridine, respectively. May play an important role in testicular development and spermatogenesis. This chain is Cytidine and dCMP deaminase domain-containing protein 1 (CDADC1), found in Homo sapiens (Human).